A 276-amino-acid polypeptide reads, in one-letter code: Undecaprenyl-diphosphatase 1 (276 aa).

5 helical membrane-spanning segments follow: residues 83-103, 108-128, 187-207, 217-237, and 252-272; these read FTLNVVIATIPAIALGLLFEK, VLFSPVPVAFALVVGGAIILW, VATEFSFFLAIPIIFGATLYE, VDSLGLFALGLVAAFVSAFVC, and VFAWYRIAFGLFVLLVGYSGW.

The protein belongs to the UppP family.

The protein localises to the cell inner membrane. The enzyme catalyses di-trans,octa-cis-undecaprenyl diphosphate + H2O = di-trans,octa-cis-undecaprenyl phosphate + phosphate + H(+). Functionally, catalyzes the dephosphorylation of undecaprenyl diphosphate (UPP). Confers resistance to bacitracin. The protein is Undecaprenyl-diphosphatase 1 of Burkholderia cenocepacia (strain HI2424).